We begin with the raw amino-acid sequence, 167 residues long: ATP synthase subunit b (167 aa).

The chain crosses the membrane as a helical span at residues 15-37 (FWQTVIFLVTLYLLSKFAWGPIM).

This sequence belongs to the ATPase B chain family. As to quaternary structure, F-type ATPases have 2 components, F(1) - the catalytic core - and F(0) - the membrane proton channel. F(1) has five subunits: alpha(3), beta(3), gamma(1), delta(1), epsilon(1). F(0) has three main subunits: a(1), b(2) and c(10-14). The alpha and beta chains form an alternating ring which encloses part of the gamma chain. F(1) is attached to F(0) by a central stalk formed by the gamma and epsilon chains, while a peripheral stalk is formed by the delta and b chains.

It localises to the cell inner membrane. In terms of biological role, f(1)F(0) ATP synthase produces ATP from ADP in the presence of a proton or sodium gradient. F-type ATPases consist of two structural domains, F(1) containing the extramembraneous catalytic core and F(0) containing the membrane proton channel, linked together by a central stalk and a peripheral stalk. During catalysis, ATP synthesis in the catalytic domain of F(1) is coupled via a rotary mechanism of the central stalk subunits to proton translocation. Functionally, component of the F(0) channel, it forms part of the peripheral stalk, linking F(1) to F(0). The sequence is that of ATP synthase subunit b from Cytophaga hutchinsonii (strain ATCC 33406 / DSM 1761 / CIP 103989 / NBRC 15051 / NCIMB 9469 / D465).